A 342-amino-acid chain; its full sequence is Dihydroorotate dehydrogenase (quinone) (342 aa).

FMN is bound by residues 60–64 (AGFDK) and threonine 84. Lysine 64 contacts substrate. 109–113 (NRMGF) lines the substrate pocket. FMN is bound by residues asparagine 137 and asparagine 170. Residue asparagine 170 participates in substrate binding. The active-site Nucleophile is serine 173. Asparagine 175 contributes to the substrate binding site. FMN contacts are provided by lysine 215 and threonine 243. 244-245 (NT) contacts substrate. Residues glycine 266, glycine 295, and 316 to 317 (YT) each bind FMN.

It belongs to the dihydroorotate dehydrogenase family. Type 2 subfamily. Monomer. It depends on FMN as a cofactor.

Its subcellular location is the cell membrane. It carries out the reaction (S)-dihydroorotate + a quinone = orotate + a quinol. The protein operates within pyrimidine metabolism; UMP biosynthesis via de novo pathway; orotate from (S)-dihydroorotate (quinone route): step 1/1. Functionally, catalyzes the conversion of dihydroorotate to orotate with quinone as electron acceptor. In Halorhodospira halophila (strain DSM 244 / SL1) (Ectothiorhodospira halophila (strain DSM 244 / SL1)), this protein is Dihydroorotate dehydrogenase (quinone).